The primary structure comprises 98 residues: NADH-ubiquinone oxidoreductase chain 4L (98 aa).

3 helical membrane-spanning segments follow: residues 1-21 (MTLTYMNIMLAFAISLLGMLT), 27-47 (VASLLCLEGMMMSLFIMATLI), and 61-81 (IILLVFAACETAVGLALLISI).

This sequence belongs to the complex I subunit 4L family. As to quaternary structure, core subunit of respiratory chain NADH dehydrogenase (Complex I) which is composed of 45 different subunits.

The protein localises to the mitochondrion inner membrane. It carries out the reaction a ubiquinone + NADH + 5 H(+)(in) = a ubiquinol + NAD(+) + 4 H(+)(out). Core subunit of the mitochondrial membrane respiratory chain NADH dehydrogenase (Complex I) which catalyzes electron transfer from NADH through the respiratory chain, using ubiquinone as an electron acceptor. Part of the enzyme membrane arm which is embedded in the lipid bilayer and involved in proton translocation. This is NADH-ubiquinone oxidoreductase chain 4L (MT-ND4L) from Macaca mulatta (Rhesus macaque).